The primary structure comprises 341 residues: Heat-shock protein cognate (HSC) co-chaperone sgt12 (341 aa).

Residues 86-123 (PSKEPASAGAQAQSTEAQQPKAGAPTPESDKLKSEGNA) are disordered. TPR repeat units lie at residues 114–147 (SDKL…APAN), 148–181 (PIYL…DPKY), and 182–215 (SKAW…EGNG). The segment at 232-280 (EEANRGAEPPADDVDDAAGASRGAGGMPDLSSLASMLGGRGGGGGGMPD) is disordered. Residues 269–278 (GGRGGGGGGM) show a composition bias toward gly residues.

Belongs to the SGT family. Forms homodimers. Component of the get4/get5/sgt2 sorting complex. Dimers of sgt2 bind directly a single get5. Binds HSC family members ssa1, sse1, hsp104 and hsc82 via its TPR domain.

The protein resides in the cytoplasm. Heat-shock protein cognate (HSC) co-chaperone that preferentially binds endoplasmic reticulum-destined tail-anchored (TA) proteins and directs them to the GET (guided entry of TA proteins) pathway via get4 and get5. Get4 and get5 form an obligate complex that catalyzes the transfer of tail-anchored proteins destined to the endoplasmic reticulum from sgt2 to the cytosolic targeting factor which then targets the TA protein to the ER membrane via get1/get2. In Aspergillus fumigatus (strain ATCC MYA-4609 / CBS 101355 / FGSC A1100 / Af293) (Neosartorya fumigata), this protein is Heat-shock protein cognate (HSC) co-chaperone sgt12.